Here is a 435-residue protein sequence, read N- to C-terminus: T-box transcription factor T (435 aa).

The T-box DNA-binding region spans 51-219 (LWLRFKELTN…YNPFAKAFLD (169 aa)). Residues 279–308 (YPTLRSHRSSPYPSPYAHRNNSPTYSDNSP) are disordered. Residues 297–308 (RNNSPTYSDNSP) show a composition bias toward polar residues.

In terms of assembly, monomer. Detected in testis, but not in other, normal tissues. Detected in lung tumors (at protein level).

It is found in the nucleus. Functionally, involved in the transcriptional regulation of genes required for mesoderm formation and differentiation. Binds to a palindromic T site 5'-TTCACACCTAGGTGTGAA-3' DNA sequence and activates gene transcription when bound to such a site. This chain is T-box transcription factor T, found in Homo sapiens (Human).